The primary structure comprises 568 residues: Peptidoglycan D,D-transpeptidase FtsI (568 aa).

The helical transmembrane segment at 19–39 (FVTLCSIVFLFLVILTLRIIF) threads the bilayer. The active-site Acyl-ester intermediate is the S302.

It belongs to the transpeptidase family. FtsI subfamily.

Its subcellular location is the cell inner membrane. It catalyses the reaction Preferential cleavage: (Ac)2-L-Lys-D-Ala-|-D-Ala. Also transpeptidation of peptidyl-alanyl moieties that are N-acyl substituents of D-alanine.. The protein operates within cell wall biogenesis; peptidoglycan biosynthesis. Its function is as follows. Catalyzes cross-linking of the peptidoglycan cell wall at the division septum. The protein is Peptidoglycan D,D-transpeptidase FtsI of Buchnera aphidicola subsp. Schizaphis graminum (strain Sg).